Here is a 107-residue protein sequence, read N- to C-terminus: Cytochrome c2 (107 aa).

Residues Cys-14, Cys-17, His-18, and Met-80 each coordinate heme c.

Belongs to the cytochrome c family. Binds 1 heme c group covalently per subunit.

Cytochrome c2 is found mainly in purple, non-sulfur, photosynthetic bacteria where it functions as the electron donor to the oxidized bacteriochlorophyll in the photophosphorylation pathway. However, it may also have a role in the respiratory chain and is found in some non-photosynthetic bacteria. This Rhodoblastus acidophilus (Rhodopseudomonas acidophila) protein is Cytochrome c2.